The chain runs to 152 residues: Large ribosomal subunit protein uL13 (152 aa).

This sequence belongs to the universal ribosomal protein uL13 family. In terms of assembly, part of the 50S ribosomal subunit.

Its function is as follows. This protein is one of the early assembly proteins of the 50S ribosomal subunit, although it is not seen to bind rRNA by itself. It is important during the early stages of 50S assembly. This is Large ribosomal subunit protein uL13 from Wolbachia sp. subsp. Drosophila simulans (strain wRi).